Here is a 420-residue protein sequence, read N- to C-terminus: Gamma-glutamyl phosphate reductase (420 aa).

The protein belongs to the gamma-glutamyl phosphate reductase family.

Its subcellular location is the cytoplasm. The enzyme catalyses L-glutamate 5-semialdehyde + phosphate + NADP(+) = L-glutamyl 5-phosphate + NADPH + H(+). Its pathway is amino-acid biosynthesis; L-proline biosynthesis; L-glutamate 5-semialdehyde from L-glutamate: step 2/2. In terms of biological role, catalyzes the NADPH-dependent reduction of L-glutamate 5-phosphate into L-glutamate 5-semialdehyde and phosphate. The product spontaneously undergoes cyclization to form 1-pyrroline-5-carboxylate. The sequence is that of Gamma-glutamyl phosphate reductase from Streptococcus pneumoniae serotype 4 (strain ATCC BAA-334 / TIGR4).